Consider the following 287-residue polypeptide: DDRGK domain-containing protein 1 (287 aa).

The Lumenal portion of the chain corresponds to 1–5 (MDLIL). A helical transmembrane segment spans residues 6 to 26 (LLGIAVALLVILVTLFFFTKG). The Cytoplasmic portion of the chain corresponds to 27–287 (KGSQESGKYN…LINLVPVSAE (261 aa)). Disordered stretches follow at residues 28-102 (GSQE…KRAK) and 135-164 (KVEA…RQEH). Low complexity predominate over residues 44–68 (AQAAPRRAQVVRNQRNRARVAAAPA). Over residues 85-102 (IPHADFNGEKMGAKKRAK) the composition is skewed to basic and acidic residues.

Belongs to the DDRGK1 family. In terms of assembly, interacts with Atg9; the interaction is transient.

It localises to the endoplasmic reticulum membrane. Substrate adapter for ufmylation, the covalent attachment of the ubiquitin-like modifier UFM1 to substrate proteins. Required for ufmylation of Atg9; protects the nervous system during aging, possibly by stabilizing Atg9 and supporting its function. In Culex quinquefasciatus (Southern house mosquito), this protein is DDRGK domain-containing protein 1.